Reading from the N-terminus, the 204-residue chain is Recombination protein RecR (204 aa).

The C4-type zinc-finger motif lies at 63–78 (CRICFNVADSELCPIC). A Toprim domain is found at 86 to 181 (NKICVVEQPQ…KVTRLARGLP (96 aa)).

Belongs to the RecR family.

In terms of biological role, may play a role in DNA repair. It seems to be involved in an RecBC-independent recombinational process of DNA repair. It may act with RecF and RecO. The polypeptide is Recombination protein RecR (Dehalococcoides mccartyi (strain ATCC BAA-2266 / KCTC 15142 / 195) (Dehalococcoides ethenogenes (strain 195))).